Consider the following 498-residue polypeptide: Serine hydroxymethyltransferase, mitochondrial (498 aa).

Lys273 is modified (N6-(pyridoxal phosphate)lysine).

The protein belongs to the SHMT family. As to quaternary structure, homotetramer. It depends on pyridoxal 5'-phosphate as a cofactor.

It is found in the mitochondrion. The enzyme catalyses (6R)-5,10-methylene-5,6,7,8-tetrahydrofolate + glycine + H2O = (6S)-5,6,7,8-tetrahydrofolate + L-serine. It participates in one-carbon metabolism; tetrahydrofolate interconversion. Interconversion of serine and glycine. This chain is Serine hydroxymethyltransferase, mitochondrial (SHM1), found in Kluyveromyces lactis (strain ATCC 8585 / CBS 2359 / DSM 70799 / NBRC 1267 / NRRL Y-1140 / WM37) (Yeast).